The following is a 411-amino-acid chain: Citrate synthase (411 aa).

Residues H304 and D363 contribute to the active site.

It belongs to the citrate synthase family.

The enzyme catalyses oxaloacetate + acetyl-CoA + H2O = citrate + CoA + H(+). It functions in the pathway carbohydrate metabolism; tricarboxylic acid cycle; isocitrate from oxaloacetate: step 1/2. In Rickettsia canadensis, this protein is Citrate synthase (gltA).